The primary structure comprises 283 residues: NifU-like protein 4, mitochondrial (283 aa).

The transit peptide at 1–48 (MKGIARLVTSLSRIGGRKVVSGTSTVTSSSSSSLLLSRRSLFISATNL) directs the protein to the mitochondrion.

Belongs to the NifU family. In terms of tissue distribution, predominantly expressed in roots.

The protein resides in the mitochondrion. Molecular scaffold for [Fe-S] cluster assembly of mitochondrial iron-sulfur proteins. In Arabidopsis thaliana (Mouse-ear cress), this protein is NifU-like protein 4, mitochondrial (NIFU4).